Reading from the N-terminus, the 171-residue chain is MKEKLTHFKVGQIVNTQGLKGEVRVYPLTDDIERFDELKDFYLGKDLNNKLAVEKVRYKGSMVIMKIKGIDSIEKAEKLKNKFMYVSREDSRELEEGEFFIADMIGMEVLTVDGKYVGILEDVLQYSANDVYVVKGEEDKEFMIPAIKKFVPTIDIDERKMIIDPIKGMID.

The 74-residue stretch at 96–169 folds into the PRC barrel domain; that stretch reads EGEFFIADMI…KMIIDPIKGM (74 aa).

The protein belongs to the RimM family. As to quaternary structure, binds ribosomal protein uS19.

It localises to the cytoplasm. Its function is as follows. An accessory protein needed during the final step in the assembly of 30S ribosomal subunit, possibly for assembly of the head region. Essential for efficient processing of 16S rRNA. May be needed both before and after RbfA during the maturation of 16S rRNA. It has affinity for free ribosomal 30S subunits but not for 70S ribosomes. The protein is Ribosome maturation factor RimM of Clostridioides difficile (strain 630) (Peptoclostridium difficile).